The primary structure comprises 276 residues: uncharacterized protein (276 aa).

The signal sequence occupies residues 1–16; that stretch reads MELGLILMFASAFVSA. N-linked (GlcNAc...) asparagine glycosylation is present at N265.

This is an uncharacterized protein from Encephalitozoon cuniculi (strain GB-M1) (Microsporidian parasite).